Consider the following 391-residue polypeptide: 1-acyl-sn-glycerol-3-phosphate acyltransferase 2 (391 aa).

Residues 3-23 traverse the membrane as a helical segment; sequence MAAAAVIVPLGILFFISGLVV. An HXXXXD motif motif is present at residues 92-97; sequence HRSDID. 2 helical membrane passes run 306–326 and 334–354; these read LAVVVSWACLLTLGAMKFLHW and KGIALSALGLGIITLCMQILI. A disordered region spans residues 358–391; sequence QSERSTPAKVAPAKPKDKHQSGSSSQTEVEEKQK.

This sequence belongs to the 1-acyl-sn-glycerol-3-phosphate acyltransferase family.

The protein localises to the endoplasmic reticulum membrane. It catalyses the reaction a 1-acyl-sn-glycero-3-phosphate + an acyl-CoA = a 1,2-diacyl-sn-glycero-3-phosphate + CoA. The protein operates within phospholipid metabolism; CDP-diacylglycerol biosynthesis; CDP-diacylglycerol from sn-glycerol 3-phosphate: step 2/3. In terms of biological role, converts lysophosphatidic acid (LPA) into phosphatidic acid by incorporating acyl moiety at the 2 position. The chain is 1-acyl-sn-glycerol-3-phosphate acyltransferase 2 (LPAT2) from Brassica oleracea (Wild cabbage).